Here is a 394-residue protein sequence, read N- to C-terminus: Protein TsgA homolog (394 aa).

12 consecutive transmembrane segments (helical) span residues 11 to 31 (WISY…GIVM), 51 to 71 (FLNA…EIIP), 76 to 96 (LVFG…GHNL), 101 to 121 (ISMF…TFLV), 134 to 154 (LLFT…AAAM), 162 to 182 (WYWV…LTLC), 206 to 226 (VGVL…LGFI), 246 to 266 (QLVS…SFIL), 274 to 294 (IVTV…STDN), 302 to 322 (ILAL…LGSL), 334 to 354 (FILT…GPIV), and 363 to 383 (LATA…LGFF).

Belongs to the major facilitator superfamily. TsgA family.

It localises to the cell inner membrane. The protein is Protein TsgA homolog of Yersinia pseudotuberculosis serotype O:1b (strain IP 31758).